A 202-amino-acid polypeptide reads, in one-letter code: Holliday junction branch migration complex subunit RuvA (202 aa).

A domain I region spans residues 1 to 64 (MIGRLRGSLA…EDAHLLYGFY (64 aa)). The domain II stretch occupies residues 65-143 (EKRERELFRE…AWEALPGTFT (79 aa)). Residues 144–153 (LVSNGPNQAE) are flexible linker. Positions 154 to 202 (PVASAESDAVSALISLGYKPQEASKAVSAIKEKDLSSADLIRRALKGMG) are domain III.

Belongs to the RuvA family. As to quaternary structure, homotetramer. Forms an RuvA(8)-RuvB(12)-Holliday junction (HJ) complex. HJ DNA is sandwiched between 2 RuvA tetramers; dsDNA enters through RuvA and exits via RuvB. An RuvB hexamer assembles on each DNA strand where it exits the tetramer. Each RuvB hexamer is contacted by two RuvA subunits (via domain III) on 2 adjacent RuvB subunits; this complex drives branch migration. In the full resolvosome a probable DNA-RuvA(4)-RuvB(12)-RuvC(2) complex forms which resolves the HJ.

The protein resides in the cytoplasm. In terms of biological role, the RuvA-RuvB-RuvC complex processes Holliday junction (HJ) DNA during genetic recombination and DNA repair, while the RuvA-RuvB complex plays an important role in the rescue of blocked DNA replication forks via replication fork reversal (RFR). RuvA specifically binds to HJ cruciform DNA, conferring on it an open structure. The RuvB hexamer acts as an ATP-dependent pump, pulling dsDNA into and through the RuvAB complex. HJ branch migration allows RuvC to scan DNA until it finds its consensus sequence, where it cleaves and resolves the cruciform DNA. This Pseudomonas syringae pv. syringae (strain B728a) protein is Holliday junction branch migration complex subunit RuvA.